The sequence spans 264 residues: MSVSVNINNVTKEYRIYRNNKERIKDALIPKNKNNTFFALDDVSITAHEGDVIGLVGINGSGKSTLSNMIGGSISPTSGNIERNGEVSVIAINAGLNGRLTGVENIEFKMLCMGFKRKEIKQLMPQVIEFSELGEFIHQPVKNYSSGMRAKLGFSINVTINPDILVIDEALSVGDQTFTQKCLDKIYEFKEANKTIFFVSHNIRQVREFCTKIAWIEGGKLKEYGDLEEVLPKYEQFLKDFKKKSKADQKAFRKGLDEKRFIVK.

Positions 24-243 (IKDALIPKNK…YEQFLKDFKK (220 aa)) constitute an ABC transporter domain. 57-64 (GINGSGKS) contributes to the ATP binding site.

This sequence belongs to the ABC transporter superfamily. Teichoic acids exporter (TC 3.A.1.104.1) family. As to quaternary structure, the complex is composed of two ATP-binding proteins (TagH) and two transmembrane proteins (TagG).

Its subcellular location is the cell membrane. The catalysed reaction is ATP + H2O + teichoic acidSide 1 = ADP + phosphate + teichoic acidSide 2.. In terms of biological role, part of the ABC transporter complex TagGH involved in teichoic acids export. Responsible for energy coupling to the transport system. In Staphylococcus haemolyticus (strain JCSC1435), this protein is Teichoic acids export ATP-binding protein TagH.